A 142-amino-acid chain; its full sequence is MSYWLCITNRDNWKVVKEKNVWGVPRRHENTMKRVKPGDKLVFYVKQESRKGEVLEPMIVGIFEVVSEPYSDSTKIFKSHTPGETYPIRVKIRPIKIGEVKFKPLIPKLSFIKNKKKWSGHLMGKAMREIPEEDYKLIESLL.

It belongs to the UPF0310 family.

The sequence is that of UPF0310 protein PYRAB08750 from Pyrococcus abyssi (strain GE5 / Orsay).